The primary structure comprises 862 residues: ATP-dependent helicase Lhr-Core (862 aa).

8 residues coordinate ATP: Gln37, Lys60, Thr61, Asp178, Glu179, Val360, Arg377, and His380. The region spanning 41–233 is the Helicase ATP-binding domain; the sequence is IMDIHRGRNV…FLVGYSYGSE (193 aa). The DEAH box signature appears at 178–181; it reads DEIH. A Helicase C-terminal domain is found at 269 to 424; it reads ALYDILHDLI…SIKVPENCLD (156 aa). The WH domain stretch occupies residues 425-513; the sequence is VLAQHIYGMA…LYSTNIGTIP (89 aa). Residues 514-862 form a domain 4 region; the sequence is DRSAAVVKCG…HQAIIDEIKR (349 aa).

The protein belongs to the Lhr helicase family. Lhr-Core subfamily. In terms of assembly, monomer.

The enzyme catalyses Couples ATP hydrolysis with the unwinding of duplex DNA by translocating in the 3'-5' direction.. The catalysed reaction is ATP + H2O = ADP + phosphate + H(+). In terms of biological role, DNA helicase that translocates in a 3'-5' direction on single-stranded (ss)DNA, probably involved in DNA repair. Most active on three- or four-stranded forked DNA; flayed structures and Holliday junction (HJ) substrates are unwound slightly less well. Also unwinds 3'-tailed duplexes; both RNA:DNA hybrids and double-stranded (ds)DNA with a 3'-single strand (ss)DNA loading strand are unwound. Substrates where the helicase loads on a 3'-ssRNA tail (DNA:RNA and RNA:RNA) were not tested. Blunt-ended dsDNA is not a substrate. Probably involved in replication-coupled DNA repair; remodeling of fork DNA after binding by Lhr generates ssDNA for ATP-dependent DNA translocation. The chain is ATP-dependent helicase Lhr-Core from Methanothermobacter thermautotrophicus (strain ATCC 29096 / DSM 1053 / JCM 10044 / NBRC 100330 / Delta H) (Methanobacterium thermoautotrophicum).